The chain runs to 277 residues: 4-hydroxy-tetrahydrodipicolinate reductase (277 aa).

Residues 11–16 (GALGRM) and 110–112 (GTT) contribute to the NAD(+) site. The active-site Proton donor/acceptor is His166. His167 contributes to the (S)-2,3,4,5-tetrahydrodipicolinate binding site. Lys170 (proton donor) is an active-site residue. (S)-2,3,4,5-tetrahydrodipicolinate is bound at residue 176–177 (GT).

The protein belongs to the DapB family.

It is found in the cytoplasm. It catalyses the reaction (S)-2,3,4,5-tetrahydrodipicolinate + NAD(+) + H2O = (2S,4S)-4-hydroxy-2,3,4,5-tetrahydrodipicolinate + NADH + H(+). The enzyme catalyses (S)-2,3,4,5-tetrahydrodipicolinate + NADP(+) + H2O = (2S,4S)-4-hydroxy-2,3,4,5-tetrahydrodipicolinate + NADPH + H(+). The protein operates within amino-acid biosynthesis; L-lysine biosynthesis via DAP pathway; (S)-tetrahydrodipicolinate from L-aspartate: step 4/4. Catalyzes the conversion of 4-hydroxy-tetrahydrodipicolinate (HTPA) to tetrahydrodipicolinate. This Synechococcus sp. (strain CC9605) protein is 4-hydroxy-tetrahydrodipicolinate reductase.